Here is a 506-residue protein sequence, read N- to C-terminus: Pleckstrin homology domain-containing family D member 1 (506 aa).

Residues 28–136 (KVQLYGVLWK…WLEMLQESGK (109 aa)) form the PH domain. The stretch at 146–391 (EAMIKSLEAQ…KVRNKEKEER (246 aa)) forms a coiled coil. R503 is subject to Omega-N-methylarginine.

This sequence belongs to the PLEKHD1 family.

This Homo sapiens (Human) protein is Pleckstrin homology domain-containing family D member 1 (PLEKHD1).